Reading from the N-terminus, the 418-residue chain is Gamma-glutamyl phosphate reductase (418 aa).

This sequence belongs to the gamma-glutamyl phosphate reductase family.

The protein resides in the cytoplasm. It catalyses the reaction L-glutamate 5-semialdehyde + phosphate + NADP(+) = L-glutamyl 5-phosphate + NADPH + H(+). It functions in the pathway amino-acid biosynthesis; L-proline biosynthesis; L-glutamate 5-semialdehyde from L-glutamate: step 2/2. Its function is as follows. Catalyzes the NADPH-dependent reduction of L-glutamate 5-phosphate into L-glutamate 5-semialdehyde and phosphate. The product spontaneously undergoes cyclization to form 1-pyrroline-5-carboxylate. The chain is Gamma-glutamyl phosphate reductase from Clostridium acetobutylicum (strain ATCC 824 / DSM 792 / JCM 1419 / IAM 19013 / LMG 5710 / NBRC 13948 / NRRL B-527 / VKM B-1787 / 2291 / W).